A 78-amino-acid polypeptide reads, in one-letter code: Acyl carrier protein (78 aa).

The 75-residue stretch at 4-78 (AEIRDKVYDI…QQAIDYIVKK (75 aa)) folds into the Carrier domain. Ser39 carries the post-translational modification O-(pantetheine 4'-phosphoryl)serine.

This sequence belongs to the acyl carrier protein (ACP) family. Post-translationally, 4'-phosphopantetheine is transferred from CoA to a specific serine of apo-ACP by AcpS. This modification is essential for activity because fatty acids are bound in thioester linkage to the sulfhydryl of the prosthetic group.

It localises to the cytoplasm. It functions in the pathway lipid metabolism; fatty acid biosynthesis. Its function is as follows. Carrier of the growing fatty acid chain in fatty acid biosynthesis. The protein is Acyl carrier protein of Chlorobium luteolum (strain DSM 273 / BCRC 81028 / 2530) (Pelodictyon luteolum).